The chain runs to 211 residues: Peptidyl-prolyl cis-trans isomerase-like 3 (211 aa).

Positions 1 to 204 constitute a PPIase cyclophilin-type domain; the sequence is MSVTLHTTHG…ETLRINRVTI (204 aa).

It belongs to the cyclophilin-type PPIase family. PPIL3 subfamily.

It catalyses the reaction [protein]-peptidylproline (omega=180) = [protein]-peptidylproline (omega=0). Its function is as follows. PPIases accelerate the folding of proteins. It catalyzes the cis-trans isomerization of proline imidic peptide bonds in oligopeptides. The polypeptide is Peptidyl-prolyl cis-trans isomerase-like 3 (cyp10) (Emericella nidulans (strain FGSC A4 / ATCC 38163 / CBS 112.46 / NRRL 194 / M139) (Aspergillus nidulans)).